We begin with the raw amino-acid sequence, 93 residues long: Antitoxin EndoAI (93 aa).

It belongs to the MazE/EndoAI family. Homodimer, forms a heterohexamer composed of alternating toxin and antitoxin homodimers which inhibits the toxin's endoribonuclease activity. Antitoxin prevents RNA binding to the endoribonuclease.

Functionally, antitoxin component of a type II toxin-antitoxin (TA) system. Antitoxin that directly inhibits activity of EndoA in vitro. Upon expression in E.coli counteracts inhibitory effect of endoribonuclease EndoA. The EndoA-EndoAI complex does not seem to bind its own promoter. The protein is Antitoxin EndoAI of Bacillus subtilis (strain 168).